The chain runs to 70 residues: Putative membrane protein insertion efficiency factor (70 aa).

This sequence belongs to the UPF0161 family.

Its subcellular location is the cell inner membrane. In terms of biological role, could be involved in insertion of integral membrane proteins into the membrane. This Francisella tularensis subsp. tularensis (strain SCHU S4 / Schu 4) protein is Putative membrane protein insertion efficiency factor.